The sequence spans 268 residues: ClpXP adapter protein SpxH (268 aa).

Belongs to the SpxH family. In terms of assembly, interacts with Spx.

It localises to the cytoplasm. Adapter protein required for efficient degradation of Spx by ClpXP under non-stress conditions. Interaction with Spx stabilizes Spx and exposes the C-terminus of Spx for recognition and proteolysis by ClpXP. This chain is ClpXP adapter protein SpxH, found in Staphylococcus aureus (strain Mu3 / ATCC 700698).